The following is a 117-amino-acid chain: Ribonuclease P protein component (117 aa).

It belongs to the RnpA family. As to quaternary structure, consists of a catalytic RNA component (M1 or rnpB) and a protein subunit.

It catalyses the reaction Endonucleolytic cleavage of RNA, removing 5'-extranucleotides from tRNA precursor.. Its function is as follows. RNaseP catalyzes the removal of the 5'-leader sequence from pre-tRNA to produce the mature 5'-terminus. It can also cleave other RNA substrates such as 4.5S RNA. The protein component plays an auxiliary but essential role in vivo by binding to the 5'-leader sequence and broadening the substrate specificity of the ribozyme. The protein is Ribonuclease P protein component of Aliivibrio fischeri (strain ATCC 700601 / ES114) (Vibrio fischeri).